The primary structure comprises 188 residues: Elongation factor P (188 aa).

Belongs to the elongation factor P family.

It is found in the cytoplasm. It functions in the pathway protein biosynthesis; polypeptide chain elongation. Functionally, involved in peptide bond synthesis. Stimulates efficient translation and peptide-bond synthesis on native or reconstituted 70S ribosomes in vitro. Probably functions indirectly by altering the affinity of the ribosome for aminoacyl-tRNA, thus increasing their reactivity as acceptors for peptidyl transferase. The sequence is that of Elongation factor P from Rickettsia typhi (strain ATCC VR-144 / Wilmington).